Reading from the N-terminus, the 397-residue chain is Phosphoglycerate kinase (397 aa).

Substrate-binding positions include 21 to 23 (DFN), R37, 60 to 63 (HLGR), R119, and R152. ATP is bound by residues K203, G294, E325, and 354–357 (GGDS).

The protein belongs to the phosphoglycerate kinase family. As to quaternary structure, monomer.

The protein localises to the cytoplasm. It carries out the reaction (2R)-3-phosphoglycerate + ATP = (2R)-3-phospho-glyceroyl phosphate + ADP. Its pathway is carbohydrate degradation; glycolysis; pyruvate from D-glyceraldehyde 3-phosphate: step 2/5. This is Phosphoglycerate kinase from Chlorobium phaeobacteroides (strain BS1).